Here is a 104-residue protein sequence, read N- to C-terminus: Putative thioredoxin-4 (104 aa).

Positions 2–104 (SKVTNVSINT…QLRKILDSMK (103 aa)) constitute a Thioredoxin domain. Active-site nucleophile residues include cysteine 31 and cysteine 34. A disulfide bond links cysteine 31 and cysteine 34.

It belongs to the thioredoxin family.

Participates in various redox reactions through the reversible oxidation of its active center dithiol to a disulfide and catalyzes dithiol-disulfide exchange reactions. In Dictyostelium discoideum (Social amoeba), this protein is Putative thioredoxin-4 (trxD).